A 116-amino-acid polypeptide reads, in one-letter code: PTS system galactose-specific EIIA component (116 aa).

Residues 11–109 (DDYMGVVMGI…AVEVVGQERR (99 aa)) enclose the PTS EIIA type-3 domain. H85 functions as the Tele-phosphohistidine intermediate in the catalytic mechanism. The residue at position 85 (H85) is a Phosphohistidine; by HPr. A Mg(2+)-binding site is contributed by D88.

In terms of assembly, homotrimer. It depends on Mg(2+) as a cofactor.

Functionally, the phosphoenolpyruvate-dependent sugar phosphotransferase system (sugar PTS), a major carbohydrate active transport system, catalyzes the phosphorylation of incoming sugar substrates concomitantly with their translocation across the cell membrane. Involved in galactose transport with PtcB and Lmg_0963. The sequence is that of PTS system galactose-specific EIIA component from Lactococcus lactis subsp. cremoris (strain MG1363).